The chain runs to 39 residues: Histone H2A (39 aa).

The span at 1–18 (AGRGKQGGKVRAKAKTRS) shows a compositional bias: basic residues. The interval 1 to 24 (AGRGKQGGKVRAKAKTRSSRAGLQ) is disordered. An N6-(2-hydroxyisobutyryl)lysine modification is found at lysine 5. Lysine 5 is subject to N6-acetyllysine. Lysine 9 carries the N6-(2-hydroxyisobutyryl)lysine; alternate modification. Lysine 9 bears the N6-lactoyllysine; alternate mark. Lysine 9 carries the N6-succinyllysine modification. Glycyl lysine isopeptide (Lys-Gly) (interchain with G-Cter in ubiquitin) cross-links involve residues lysine 13 and lysine 15. N6-(2-hydroxyisobutyryl)lysine; alternate is present on lysine 36.

Belongs to the histone H2A family. The nucleosome is a histone octamer containing two molecules each of H2A, H2B, H3 and H4 assembled in one H3-H4 heterotetramer and two H2A-H2B heterodimers. The octamer wraps approximately 147 bp of DNA. In terms of processing, monoubiquitination of C-terminus gives a specific tag for epigenetic transcriptional repression. Following DNA double-strand breaks (DSBs), it is ubiquitinated through 'Lys-63' linkage of ubiquitin moieties.

The protein localises to the nucleus. It is found in the chromosome. In terms of biological role, core component of nucleosome. Nucleosomes wrap and compact DNA into chromatin, limiting DNA accessibility to the cellular machineries which require DNA as a template. Histones thereby play a central role in transcription regulation, DNA repair, DNA replication and chromosomal stability. DNA accessibility is regulated via a complex set of post-translational modifications of histones, also called histone code, and nucleosome remodeling. Buforins are strong antimicrobial activities in vitro against a broad-spectrum of microorganisms including fungi. Buforin II is more potent than buforin I. The sequence is that of Histone H2A from Bufo gargarizans (Asian toad).